The primary structure comprises 123 residues: Small ribosomal subunit protein uS13 (123 aa).

A disordered region spans residues 93–123 (HRKGLPVRGQNTKNNARTRKGPAKAIAGKKK). Positions 108–123 (ARTRKGPAKAIAGKKK) are enriched in basic residues.

Belongs to the universal ribosomal protein uS13 family. In terms of assembly, part of the 30S ribosomal subunit. Forms a loose heterodimer with protein S19. Forms two bridges to the 50S subunit in the 70S ribosome.

Located at the top of the head of the 30S subunit, it contacts several helices of the 16S rRNA. In the 70S ribosome it contacts the 23S rRNA (bridge B1a) and protein L5 of the 50S subunit (bridge B1b), connecting the 2 subunits; these bridges are implicated in subunit movement. Contacts the tRNAs in the A and P-sites. This Leuconostoc citreum (strain KM20) protein is Small ribosomal subunit protein uS13.